The chain runs to 433 residues: Adenylosuccinate synthetase (433 aa).

GTP contacts are provided by residues Gly11 to Lys17 and Gly39 to Thr41. Residue Asp12 is the Proton acceptor of the active site. Positions 12 and 39 each coordinate Mg(2+). Residues Asp12–Lys15, Asn37–His40, Thr134, Arg148, Asn230, Thr245, and Arg309 contribute to the IMP site. His40 functions as the Proton donor in the catalytic mechanism. Val305–Arg311 lines the substrate pocket. Residues Arg311, Lys337–Asp339, and Gly419–Gly421 each bind GTP.

Belongs to the adenylosuccinate synthetase family. In terms of assembly, homodimer. Requires Mg(2+) as cofactor.

It is found in the cytoplasm. It catalyses the reaction IMP + L-aspartate + GTP = N(6)-(1,2-dicarboxyethyl)-AMP + GDP + phosphate + 2 H(+). It functions in the pathway purine metabolism; AMP biosynthesis via de novo pathway; AMP from IMP: step 1/2. In terms of biological role, plays an important role in the de novo pathway and in the salvage pathway of purine nucleotide biosynthesis. Catalyzes the first committed step in the biosynthesis of AMP from IMP. This is Adenylosuccinate synthetase from Saccharomyces cerevisiae (strain AWRI1631) (Baker's yeast).